The following is a 289-amino-acid chain: Inorganic pyrophosphatase (289 aa).

Ser2 is modified (N-acetylserine). The residue at position 57 (Lys57) is an N6-acetyllysine. Mg(2+) is bound by residues Asp116, Asp121, and Asp153. Residue Ser250 is modified to Phosphoserine.

Belongs to the PPase family. As to quaternary structure, homodimer. It depends on Mg(2+) as a cofactor. The N-terminus is blocked. Highest levels are found in retinal rod outer segments.

The protein localises to the cytoplasm. It catalyses the reaction diphosphate + H2O = 2 phosphate + H(+). The chain is Inorganic pyrophosphatase (PPA1) from Bos taurus (Bovine).